The following is a 422-amino-acid chain: UDP-N-acetylglucosamine 1-carboxyvinyltransferase (422 aa).

23–24 (KN) provides a ligand contact to phosphoenolpyruvate. UDP-N-acetyl-alpha-D-glucosamine is bound at residue arginine 92. Cysteine 116 (proton donor) is an active-site residue. At cysteine 116 the chain carries 2-(S-cysteinyl)pyruvic acid O-phosphothioketal. UDP-N-acetyl-alpha-D-glucosamine is bound by residues 121–125 (RPVDL), 161–165 (KVSVG), aspartate 306, and isoleucine 328.

Belongs to the EPSP synthase family. MurA subfamily.

The protein localises to the cytoplasm. It catalyses the reaction phosphoenolpyruvate + UDP-N-acetyl-alpha-D-glucosamine = UDP-N-acetyl-3-O-(1-carboxyvinyl)-alpha-D-glucosamine + phosphate. It participates in cell wall biogenesis; peptidoglycan biosynthesis. Cell wall formation. Adds enolpyruvyl to UDP-N-acetylglucosamine. This chain is UDP-N-acetylglucosamine 1-carboxyvinyltransferase, found in Aliivibrio fischeri (strain MJ11) (Vibrio fischeri).